The following is a 106-amino-acid chain: Biogenesis of lysosome-related organelles complex 1 subunit BLS1 (106 aa).

It belongs to the BLOC1S1 family. As to quaternary structure, component of the biogenesis of lysosome-related organelles complex-1 (BLOC-1).

It localises to the endosome. In terms of biological role, component of the biogenesis of lysosome-related organelles complex-1 (BLOC-1), a complex involved in endosomal cargo sorting. In Candida glabrata (strain ATCC 2001 / BCRC 20586 / JCM 3761 / NBRC 0622 / NRRL Y-65 / CBS 138) (Yeast), this protein is Biogenesis of lysosome-related organelles complex 1 subunit BLS1 (BLS1).